The following is a 195-amino-acid chain: AP-4-A phosphorylase (195 aa).

A compositionally biased stretch (basic and acidic residues) spans 1–17; that stretch reads MSDEDRTDRATEDHTIF. Residues 1–20 are disordered; it reads MSDEDRTDRATEDHTIFDRG. Residues 57–166 form the HIT domain; the sequence is PFTEIPQLSD…VPRWGGDANF (110 aa). Residues 151 to 155 carry the Histidine triad motif motif; sequence HLHVH. Residue H153 is the Tele-AMP-histidine intermediate of the active site.

As to quaternary structure, homotetramer. A divalent metal cation serves as cofactor.

It carries out the reaction ADP + ATP + H(+) = P(1),P(4)-bis(5'-adenosyl) tetraphosphate + phosphate. In terms of biological role, catabolizes diadenosine 5',5'''-P1,P4-tetraphosphate (Ap4A) into ADP and ATP. This chain is AP-4-A phosphorylase, found in Mycobacterium tuberculosis (strain CDC 1551 / Oshkosh).